The following is a 250-amino-acid chain: MNETEKSTHFGYQTVPTDQKTDKVKHVFESVAAKYDLMNDLMSLGIHRWWKDFAITQCRLRTGQRILDLAGGTGDLAKRISPLVGDEGEVVIADINAAMLNVGRRRLLDQGIFRNIQFIQADAEKLPFPNNFFDRIVIGFGLRNVTNQLAALQSMHRVIKPGGFVVILEFSKPTLAPLKAVYDAYSFQLLPRLGKLVAKDEESYRYLVESIRMHPDQEALLSKMTDAGFEDCDYHNLSGGIVAVHRGYKF.

S-adenosyl-L-methionine contacts are provided by residues threonine 73, aspartate 94, and 122 to 123; that span reads DA.

It belongs to the class I-like SAM-binding methyltransferase superfamily. MenG/UbiE family.

The enzyme catalyses a 2-demethylmenaquinol + S-adenosyl-L-methionine = a menaquinol + S-adenosyl-L-homocysteine + H(+). The catalysed reaction is a 2-methoxy-6-(all-trans-polyprenyl)benzene-1,4-diol + S-adenosyl-L-methionine = a 5-methoxy-2-methyl-3-(all-trans-polyprenyl)benzene-1,4-diol + S-adenosyl-L-homocysteine + H(+). It functions in the pathway quinol/quinone metabolism; menaquinone biosynthesis; menaquinol from 1,4-dihydroxy-2-naphthoate: step 2/2. It participates in cofactor biosynthesis; ubiquinone biosynthesis. Functionally, methyltransferase required for the conversion of demethylmenaquinol (DMKH2) to menaquinol (MKH2) and the conversion of 2-polyprenyl-6-methoxy-1,4-benzoquinol (DDMQH2) to 2-polyprenyl-3-methyl-6-methoxy-1,4-benzoquinol (DMQH2). This is Ubiquinone/menaquinone biosynthesis C-methyltransferase UbiE from Coxiella burnetii (strain RSA 493 / Nine Mile phase I).